The chain runs to 553 residues: T-complex protein 1 subunit eta (553 aa).

Glycine 41 is an ADP binding site. Glycine 41 is a binding site for ATP. Aspartate 92 provides a ligand contact to Mg(2+). Residues glycine 93, threonine 94, threonine 95, serine 96, serine 164, and serine 165 each coordinate ADP. Glycine 93 lines the ATP pocket. Residue serine 96 coordinates ATP. ATP-binding residues include arginine 398 and glycine 409. 3 residues coordinate ADP: glycine 409, glutamate 494, and arginine 499. Arginine 499 contacts ATP. The segment at 523 to 553 (PRSTVDAPPGGRGRGRGQTPQPLRPRSVALS) is disordered. The segment covering 539-553 (GQTPQPLRPRSVALS) has biased composition (low complexity).

Component of the chaperonin-containing T-complex (TRiC), a hexadecamer composed of two identical back-to-back stacked rings enclosing a protein folding chamber. Each ring is made up of eight different subunits: TCP1/CCT1, CCT2, CCT3, CCT4, CCT5, CCT6A/CCT6, CCT7, CCT8.

The protein resides in the cytoplasm. It catalyses the reaction ATP + H2O = ADP + phosphate + H(+). Functionally, component of the chaperonin-containing T-complex (TRiC), a molecular chaperone complex that assists the folding of actin, tubulin and other proteins upon ATP hydrolysis. This Gallus gallus (Chicken) protein is T-complex protein 1 subunit eta.